The primary structure comprises 424 residues: MASSNLIKQLQERGLVAQVTDEEALAERLAQGPIALYCGFDPTADSLHLGHLVPLLCLKRFQQAGHKPVALVGGATGLIGDPSFKAAERKLNTEETVQEWVDKIRKQVAPFLDFDCGENSAIAANNYDWFGNMNVLTFLRDIGKHFSVNQMINKEAVKQRLNREDEGMSITEFSYNLQQGYDWTCLNTHYYVELQIGGSDQRWNITSEIDLTRRLHQNHVLGLTVPLITKADGTKFGKTEGGAVWLDPKKTSPYKFYQFWINTADADVYRFLKFFTFMSIEEINALEEEDKNSGKAPRAQYVLAEQVTRLVHGEEGLQAAKRITECLFSGSLSALSEADFEQLAQDGVPMVEMEKGADLMQALVDSELQPSRGQARKTIASNAITINGEKQSDPEYFFKEEDRLFGRFTLLRRGKKNYCLICWK.

Position 37 (tyrosine 37) interacts with L-tyrosine. The 'HIGH' region signature appears at 42–51 (PTADSLHLGH). Lysine 144 bears the N6-acetyllysine mark. The L-tyrosine site is built by tyrosine 175 and glutamine 179. Positions 235 to 239 (KFGKT) match the 'KMSKS' region motif. Lysine 238 lines the ATP pocket. In terms of domain architecture, S4 RNA-binding spans 357–414 (ADLMQALVDSELQPSRGQARKTIASNAITINGEKQSDPEYFFKEEDRLFGRFTLLRRG).

Belongs to the class-I aminoacyl-tRNA synthetase family. TyrS type 1 subfamily. As to quaternary structure, homodimer.

It is found in the cytoplasm. The catalysed reaction is tRNA(Tyr) + L-tyrosine + ATP = L-tyrosyl-tRNA(Tyr) + AMP + diphosphate + H(+). Its function is as follows. Catalyzes the attachment of tyrosine to tRNA(Tyr) in a two-step reaction: tyrosine is first activated by ATP to form Tyr-AMP and then transferred to the acceptor end of tRNA(Tyr). The chain is Tyrosine--tRNA ligase from Shigella boydii serotype 4 (strain Sb227).